Reading from the N-terminus, the 322-residue chain is Undecaprenyl-phosphate 4-deoxy-4-formamido-L-arabinose transferase (322 aa).

The Cytoplasmic segment spans residues 1–235; the sequence is MFEIHPVKKV…TCLTTTPLRM (235 aa). The helical transmembrane segment at 236–256 threads the bilayer; that stretch reads LSLLGSIIAIGGFSIAVLLVI. Topologically, residues 257–269 are periplasmic; the sequence is LRLTFGPQWAAEG. Residues 270–290 form a helical membrane-spanning segment; the sequence is VFMLFAVLFTFIGAQFIGMGL. Topologically, residues 291-322 are cytoplasmic; it reads LGEYIGRIYTDVRARPRYFVQQVIRPSSKENE.

The protein belongs to the glycosyltransferase 2 family.

The protein localises to the cell inner membrane. It carries out the reaction UDP-4-deoxy-4-formamido-beta-L-arabinose + di-trans,octa-cis-undecaprenyl phosphate = 4-deoxy-4-formamido-alpha-L-arabinopyranosyl di-trans,octa-cis-undecaprenyl phosphate + UDP. It functions in the pathway glycolipid biosynthesis; 4-amino-4-deoxy-alpha-L-arabinose undecaprenyl phosphate biosynthesis; 4-amino-4-deoxy-alpha-L-arabinose undecaprenyl phosphate from UDP-4-deoxy-4-formamido-beta-L-arabinose and undecaprenyl phosphate: step 1/2. The protein operates within bacterial outer membrane biogenesis; lipopolysaccharide biosynthesis. Its function is as follows. Catalyzes the transfer of 4-deoxy-4-formamido-L-arabinose from UDP to undecaprenyl phosphate. The modified arabinose is attached to lipid A and is required for resistance to polymyxin and cationic antimicrobial peptides. The chain is Undecaprenyl-phosphate 4-deoxy-4-formamido-L-arabinose transferase from Escherichia coli O7:K1 (strain IAI39 / ExPEC).